A 43-amino-acid polypeptide reads, in one-letter code: Antimicrobial protein PcfHb (43 aa).

Possible monomer. As to expression, expressed in mucus-secreting tissues.

The protein localises to the secreted. In terms of biological role, shows antimicrobial activity against M.luteus (MIC=4 uM) and E.coli (MIC=12 uM), as well as against the yeast C.tropicalis (MIC=4 uM). Shows a pro-inflammatory effect, since the topical application of the protein induces an increase of cellular recruitment characterized by an increase in the number of leukocyte rolling. Does not show hemolytic activity on human erythrocytes (at doses up to 100 uM). The chain is Antimicrobial protein PcfHb from Potamotrygon cf. henlei (Freshwater stingray).